The chain runs to 297 residues: Homoserine kinase (297 aa).

P82–A92 provides a ligand contact to ATP.

Belongs to the GHMP kinase family. Homoserine kinase subfamily.

The protein localises to the cytoplasm. The catalysed reaction is L-homoserine + ATP = O-phospho-L-homoserine + ADP + H(+). It participates in amino-acid biosynthesis; L-threonine biosynthesis; L-threonine from L-aspartate: step 4/5. Its function is as follows. Catalyzes the ATP-dependent phosphorylation of L-homoserine to L-homoserine phosphate. The protein is Homoserine kinase of Clostridium botulinum (strain Kyoto / Type A2).